Consider the following 517-residue polypeptide: Ovoinhibitor (517 aa).

Kazal-like domains are found at residues 67–132 (FGIE…ECRP), 133–197 (KHVT…ECKL), 198–263 (EIGS…KCRQ), 264–329 (EIPE…RCKE), 330–394 (RSTP…RCRE), 395–460 (EVPE…RCEE), and 461–517 (DITK…MAAC). A glycan (N-linked (GlcNAc...) asparagine) is linked at Asn72. 21 disulfide bridges follow: Cys73–Cys112, Cys90–Cys109, Cys98–Cys130, Cys139–Cys177, Cys155–Cys174, Cys163–Cys195, Cys204–Cys243, Cys221–Cys240, Cys229–Cys261, Cys270–Cys309, Cys287–Cys306, Cys295–Cys327, Cys336–Cys374, Cys352–Cys371, Cys360–Cys392, Cys401–Cys440, Cys418–Cys437, Cys426–Cys458, Cys467–Cys499, Cys477–Cys496, and Cys485–Cys517. A glycan (N-linked (GlcNAc...) asparagine) is linked at Asn186. Asn506 carries an N-linked (GlcNAc...) asparagine glycan.

Post-translationally, glycosylated. In terms of tissue distribution, expressed in oviduct (at protein level). Expressed in egg white (at protein level). Expressed in egg yolk plasma of non-fertilized eggs (at protein level). Expressed in the magnum of the oviduct (at protein level). Expressed in oviduct. Expressed in liver. Expressed in the cortico-medullary border region of the bursa of Fabricius by the bursal secretory dendritic-like cells. Highly expressed in the magnum of the oviduct, and at a lower level in uterus. Weakly expressed in white isthmus and very weakly in infundibulum. Not expressed in duodenum and kidney.

Its subcellular location is the secreted. Serine protease inhibitor involved in antimicrobial egg defense preventing contamination of table eggs (non-fertilized eggs) and protecting the chick embryo (fertilized eggs). Inhibits trypsin, chymotrypsin, elastase, subtilisin and a proteinase of fungus Aspergillus oryzae. Inhibits calcium-activated potassium channels KCNMA1 (bovine) and slo (Drosophila). Has antibacterial activity against B.thuringiensis LMSA 3.06.004, but not against S.aureus CIP 103 811, P.aeruginosa PAO1, B.cereus ATCC6464 or B.subtilis ATCC 6633. This Gallus gallus (Chicken) protein is Ovoinhibitor.